Here is a 286-residue protein sequence, read N- to C-terminus: Deleted in azoospermia-like (286 aa).

Residues 30 to 105 (NTVFVGGIDI…KKLKLGPAIR (76 aa)) enclose the RRM domain. The DAZ domain occupies 155–180 (ACPYPSSPPMAIQQIPVGCQQPSYFQ).

This sequence belongs to the RRM DAZ family. Interacts with the C-terminus of pabp1 and with epabp. Prior to oocyte maturation, found in a complex with epabp and pum2 proteins and spdy1 mRNA; pum2 dissociates from the complex during maturation. Germ-line specific; expressed in adult testis and ovary. Localized specifically to the oocyte and embryonic germ plasm and to migrating primordial germ cells (PGCs).

It localises to the cytoplasm. RNA-binding protein that is required for primordial germ cell (PGC) differentiation and indirectly necessary for the migration of PGCs through the endoderm. May promote meiotic cell division during spermatogenesis. Shows a preference for G- and U-rich RNAs and probably binds the 3'-UTR of target mRNAs. Stimulates the initiation of translation of mRNAs through the recruitment of poly(A)-binding proteins (PABPs). The protein is Deleted in azoospermia-like of Xenopus tropicalis (Western clawed frog).